The following is a 745-amino-acid chain: Cytoplasmic polyadenylation element-binding protein 3 (745 aa).

Disordered stretches follow at residues 1-45, 94-180, and 204-283; these read MNLN…KSPT, VGSK…TNNS, and NKAN…FGEL. The span at 162 to 175 shows a compositional bias: basic and acidic residues; sequence LNFERDAEQKKDST. Residues 219 to 229 are compositionally biased toward polar residues; sequence ETPTDSPQKGF. A compositionally biased stretch (low complexity) spans 230 to 240; the sequence is SSSTESSPSDS. The segment covering 241 to 255 has biased composition (polar residues); it reads MNQFPSREHFTSANE. The span at 264-276 shows a compositional bias: basic and acidic residues; that stretch reads FQQEHGNKNRDSD. An RRM domain is found at 297-319; the sequence is IFVGGVPWDITEAALKDSFGEFG.

In terms of biological role, cytoplasmic polyadenylation element binding protein that binds to and regulates the translation of specific mRNAs. May not be required for oogenesis. This chain is Cytoplasmic polyadenylation element-binding protein 3 (cpb-3), found in Caenorhabditis elegans.